The sequence spans 459 residues: XK-related protein 3 (459 aa).

10 helical membrane passes run 35 to 55 (FSIIFSTVLYCGEVAFGLYMF), 68 to 88 (SFTISFIIVGAILDQIILMFF), 97 to 117 (AALLFWHILLLGPIVRCLHTI), 169 to 189 (IQAFLGSVPQLILQMYISLTI), 199 to 219 (LMTFSLLSVTYGAIRCNILAI), 238 to 258 (VVMWRFLEVISRVVTLAFFIA), 264 to 284 (SLPVLLIIYFVSLLAPWLEFW), 300 to 320 (MVGTVLMLFLITLLYAAINFS), 345 to 365 (ILHYSFQFLENVIMILVFRFF), and 377 to 397 (LIAVQLIISYLLATGFMLLFY).

The protein belongs to the XK family. In terms of tissue distribution, expressed predominantly, if not exclusively, in testis.

It is found in the cell membrane. The chain is XK-related protein 3 (XKR3) from Homo sapiens (Human).